The sequence spans 873 residues: Protein SEY1 (873 aa).

Residues 1 to 750 lie on the Cytoplasmic side of the membrane; that stretch reads MVANGHFFAG…KRSAIGGITQ (750 aa). The GB1/RHD3-type G domain occupies 50–308; the sequence is GFNYHLISVF…IPADGFAVYA (259 aa). Residue 60–67 participates in GTP binding; that stretch reads GSQSTGKS. Positions 677–701 are disordered; it reads LDKWIGHTPSSATPADEEDLTPIGG. The span at 691–701 shows a compositional bias: acidic residues; the sequence is ADEEDLTPIGG. Residues 751–771 traverse the membrane as a helical segment; sequence VPLYFYGLLLALGWNEIVAVL. Over 772-774 the chain is Lumenal; it reads RNP. A helical transmembrane segment spans residues 775 to 795; sequence AYFLLLFVCAVTAYVTYQLNL. Topologically, residues 796 to 873 are cytoplasmic; the sequence is WGPIIKMTEA…IDDADDDDDF (78 aa). Positions 841 to 873 are disordered; it reads EGYDMSNMKNRKSAGGYQNNRSHIDDADDDDDF.

The protein belongs to the TRAFAC class dynamin-like GTPase superfamily. GB1/RHD3 GTPase family. RHD3 subfamily.

Its subcellular location is the endoplasmic reticulum membrane. Its function is as follows. Cooperates with the reticulon proteins and tubule-shaping DP1 family proteins to generate and maintain the structure of the tubular endoplasmic reticulum network. Has GTPase activity, which is required for its function in ER organization. This chain is Protein SEY1, found in Paracoccidioides lutzii (strain ATCC MYA-826 / Pb01) (Paracoccidioides brasiliensis).